The chain runs to 3102 residues: Laminin subunit alpha lam-3 (3102 aa).

The first 16 residues, Met1 to Gly16, serve as a signal peptide directing secretion. N-linked (GlcNAc...) asparagine glycosylation is found at Asn19, Asn135, and Asn237. In terms of domain architecture, Laminin N-terminal spans Ser44 to Gln295. 16 disulfides stabilise this stretch: Cys296-Cys305, Cys298-Cys316, Cys318-Cys327, Cys330-Cys350, Cys353-Cys362, Cys355-Cys387, Cys390-Cys399, Cys402-Cys420, Cys423-Cys435, Cys425-Cys451, Cys453-Cys462, Cys465-Cys475, Cys478-Cys491, Cys480-Cys496, Cys498-Cys507, and Cys510-Cys525. 4 consecutive Laminin EGF-like domains span residues Cys296–Gln352, Cys353–Thr422, Cys423–Pro477, and Cys478–Pro527. The Laminin IV type A 1 domain maps to Ile548–Val740. 31 cysteine pairs are disulfide-bonded: Cys774–Cys783, Cys776–Cys790, Cys793–Cys802, Cys805–Cys822, Cys825–Cys838, Cys827–Cys858, Cys861–Cys870, Cys873–Cys886, Cys889–Cys903, Cys891–Cys910, Cys913–Cys922, Cys925–Cys938, Cys941–Cys953, Cys943–Cys960, Cys962–Cys971, Cys974–Cys985, Cys988–Cys1000, Cys990–Cys1007, Cys1009–Cys1018, Cys1021–Cys1033, Cys1036–Cys1049, Cys1038–Cys1056, Cys1058–Cys1067, Cys1070–Cys1083, Cys1086–Cys1098, Cys1088–Cys1105, Cys1107–Cys1116, Cys1119–Cys1131, Cys1134–Cys1144, Cys1137–Cys1151, and Cys1153–Cys1162. 10 consecutive Laminin EGF-like domains span residues Cys774 to Gln824, Cys825 to Glu888, Cys889 to Pro940, Cys941 to Ala987, Cys988 to Phe1035, Cys1036 to Asp1085, Cys1086 to Glu1133, Cys1134 to Leu1180, Cys1181 to Pro1226, and Cys1227 to Glu1283. Asn796 carries N-linked (GlcNAc...) asparagine glycosylation. Residue Asn991 is glycosylated (N-linked (GlcNAc...) asparagine). The N-linked (GlcNAc...) asparagine glycan is linked to Asn1027. A glycan (N-linked (GlcNAc...) asparagine) is linked at Asn1076. An N-linked (GlcNAc...) asparagine glycan is attached at Asn1164. 9 cysteine pairs are disulfide-bonded: Cys1165–Cys1178, Cys1181–Cys1193, Cys1183–Cys1200, Cys1202–Cys1211, Cys1214–Cys1224, Cys1227–Cys1246, Cys1229–Cys1252, Cys1254–Cys1263, and Cys1266–Cys1281. Residue Asn1288 is glycosylated (N-linked (GlcNAc...) asparagine). One can recognise a Laminin IV type A 2 domain in the interval Gln1295 to Lys1496. Cystine bridges form between Cys1540-Cys1549, Cys1542-Cys1556, Cys1559-Cys1568, Cys1571-Cys1587, Cys1590-Cys1603, Cys1592-Cys1614, Cys1617-Cys1626, Cys1629-Cys1644, Cys1647-Cys1659, Cys1649-Cys1666, Cys1668-Cys1677, and Cys1680-Cys1691. Laminin EGF-like domains lie at Cys1540–Lys1589, Cys1590–Pro1646, and Cys1647–Ser1693. 9 N-linked (GlcNAc...) asparagine glycosylation sites follow: Asn1717, Asn1734, Asn1777, Asn1806, Asn1839, Asn1875, Asn1969, Asn1984, and Asn2048. The tract at residues Glu2061–Ser2084 is disordered. Residues Asn2091, Asn2193, Asn2369, and Asn2479 are each glycosylated (N-linked (GlcNAc...) asparagine). Laminin G-like domains are found at residues Ser2467 to Cys2644, Asp2652 to Cys2839, and Arg2913 to Cys3088. A disulfide bridge connects residues Cys2617 and Cys2644. Residues Asn2672 and Asn2686 are each glycosylated (N-linked (GlcNAc...) asparagine). Cys2814 and Cys2839 form a disulfide bridge. N-linked (GlcNAc...) asparagine glycans are attached at residues Asn2932, Asn2959, and Asn3007. Residues Cys3058 and Cys3088 are joined by a disulfide bond.

In terms of assembly, laminin is a complex glycoprotein, consisting of three different polypeptide chains (alpha, beta, gamma), which are bound to each other by disulfide bonds into a cross-shaped molecule comprising one long and three short arms with globules at each end.

It is found in the secreted. It localises to the extracellular space. Its subcellular location is the extracellular matrix. The protein localises to the basement membrane. Binding to cells via a high affinity receptor, laminin is thought to mediate the attachment, migration and organization of cells into tissues during embryonic development by interacting with other extracellular matrix components. Required to assemble a stable basement membrane and for organizing receptor complexes and cytoskeletal components to the proper cell surfaces. During embryogenesis, does not require the presence of collagen type IV in order to associate with cell surfaces, prior to assembly of the prototypical basement membrane. Plays an important role in muscle contraction of the body. Probably plays a distinct role from the related laminin subunit alpha epi-1. In Caenorhabditis elegans, this protein is Laminin subunit alpha lam-3.